Here is a 274-residue protein sequence, read N- to C-terminus: Shikimate dehydrogenase (NADP(+)) (274 aa).

Shikimate-binding positions include 14 to 16 and Thr-61; that span reads SLS. Lys-65 functions as the Proton acceptor in the catalytic mechanism. Positions 85 and 106 each coordinate shikimate. Residues 130-134, 153-158, and Ala-217 each bind NADP(+); these read GAGGA and NRTAER. A shikimate-binding site is contributed by Tyr-219. Gly-240 is a binding site for NADP(+).

It belongs to the shikimate dehydrogenase family. Homodimer.

It catalyses the reaction shikimate + NADP(+) = 3-dehydroshikimate + NADPH + H(+). The protein operates within metabolic intermediate biosynthesis; chorismate biosynthesis; chorismate from D-erythrose 4-phosphate and phosphoenolpyruvate: step 4/7. Involved in the biosynthesis of the chorismate, which leads to the biosynthesis of aromatic amino acids. Catalyzes the reversible NADPH linked reduction of 3-dehydroshikimate (DHSA) to yield shikimate (SA). The chain is Shikimate dehydrogenase (NADP(+)) from Halorubrum lacusprofundi (strain ATCC 49239 / DSM 5036 / JCM 8891 / ACAM 34).